A 220-amino-acid chain; its full sequence is MMIAGIDEAGKGPVIGPMCIGGVKIDESKAHILKVLGVADSKKLTPKKREQLASQIKKHADGYFIFEVSPSQIDELRKIMSMNEIMVVCFAKVLEQLKPDIVYADAADVKAERFAENLLRQYAKTSPDHAKKIKVVSMHQADAIYPVVSAASIIAKVRRDELIEELKREWCIDFGSGYPSDPKTRGFLLKWGKEHGGDFPDIVRQSWQTVENIREELKKS.

Positions 1–219 (MMIAGIDEAG…VENIREELKK (219 aa)) constitute an RNase H type-2 domain. The a divalent metal cation site is built by aspartate 7, glutamate 8, and aspartate 105.

It belongs to the RNase HII family. Requires Mn(2+) as cofactor. Mg(2+) is required as a cofactor.

It is found in the cytoplasm. It carries out the reaction Endonucleolytic cleavage to 5'-phosphomonoester.. Endonuclease that specifically degrades the RNA of RNA-DNA hybrids. This Methanosarcina mazei (strain ATCC BAA-159 / DSM 3647 / Goe1 / Go1 / JCM 11833 / OCM 88) (Methanosarcina frisia) protein is Ribonuclease HII.